A 147-amino-acid chain; its full sequence is Nucleoside diphosphate kinase (147 aa).

6 residues coordinate ATP: K9, F57, R85, T91, R102, and N112. H115 acts as the Pros-phosphohistidine intermediate in catalysis.

It belongs to the NDK family. As to quaternary structure, homotetramer. The cofactor is Mg(2+).

It is found in the cytoplasm. The catalysed reaction is a 2'-deoxyribonucleoside 5'-diphosphate + ATP = a 2'-deoxyribonucleoside 5'-triphosphate + ADP. It catalyses the reaction a ribonucleoside 5'-diphosphate + ATP = a ribonucleoside 5'-triphosphate + ADP. Major role in the synthesis of nucleoside triphosphates other than ATP. The ATP gamma phosphate is transferred to the NDP beta phosphate via a ping-pong mechanism, using a phosphorylated active-site intermediate. This chain is Nucleoside diphosphate kinase, found in Listeria monocytogenes serotype 4a (strain HCC23).